We begin with the raw amino-acid sequence, 124 residues long: Fluoride-specific ion channel FluC (124 aa).

A run of 4 helical transmembrane segments spans residues 4 to 24 (VIFIGIFGALGCLCRYYLSGW), 32 to 52 (AFPYGTFAVNIIGAFLIGLIM), 68 to 88 (GLTIGFLGGLTTFSTFSYETF), and 96 to 116 (LLIASVNVLTSVLVCLVFTWL). Na(+) is bound by residues Gly75 and Thr78.

It belongs to the fluoride channel Fluc/FEX (TC 1.A.43) family.

Its subcellular location is the cell inner membrane. It carries out the reaction fluoride(in) = fluoride(out). With respect to regulation, na(+) is not transported, but it plays an essential structural role and its presence is essential for fluoride channel function. In terms of biological role, fluoride-specific ion channel. Important for reducing fluoride concentration in the cell, thus reducing its toxicity. In Geotalea daltonii (strain DSM 22248 / JCM 15807 / FRC-32) (Geobacter daltonii), this protein is Fluoride-specific ion channel FluC.